The chain runs to 768 residues: Phosphoribosylformylglycinamidine synthase subunit PurL (768 aa).

Residue H48 is part of the active site. Residues Y51 and K90 each contribute to the ATP site. Residue E92 participates in Mg(2+) binding. Substrate is bound by residues 93 to 96 (SHNH) and R115. H94 (proton acceptor) is an active-site residue. D116 serves as a coordination point for Mg(2+). Q239 is a substrate binding site. D267 serves as a coordination point for Mg(2+). 311–313 (ESQ) is a substrate binding site. ATP is bound by residues D507 and G544. Residue N545 coordinates Mg(2+). Substrate is bound at residue S547.

Belongs to the FGAMS family. As to quaternary structure, monomer. Part of the FGAM synthase complex composed of 1 PurL, 1 PurQ and 2 PurS subunits.

The protein localises to the cytoplasm. It catalyses the reaction N(2)-formyl-N(1)-(5-phospho-beta-D-ribosyl)glycinamide + L-glutamine + ATP + H2O = 2-formamido-N(1)-(5-O-phospho-beta-D-ribosyl)acetamidine + L-glutamate + ADP + phosphate + H(+). It functions in the pathway purine metabolism; IMP biosynthesis via de novo pathway; 5-amino-1-(5-phospho-D-ribosyl)imidazole from N(2)-formyl-N(1)-(5-phospho-D-ribosyl)glycinamide: step 1/2. Functionally, part of the phosphoribosylformylglycinamidine synthase complex involved in the purines biosynthetic pathway. Catalyzes the ATP-dependent conversion of formylglycinamide ribonucleotide (FGAR) and glutamine to yield formylglycinamidine ribonucleotide (FGAM) and glutamate. The FGAM synthase complex is composed of three subunits. PurQ produces an ammonia molecule by converting glutamine to glutamate. PurL transfers the ammonia molecule to FGAR to form FGAM in an ATP-dependent manner. PurS interacts with PurQ and PurL and is thought to assist in the transfer of the ammonia molecule from PurQ to PurL. This chain is Phosphoribosylformylglycinamidine synthase subunit PurL, found in Parasynechococcus marenigrum (strain WH8102).